Reading from the N-terminus, the 319-residue chain is Cytochrome f (319 aa).

Positions Met1–Ala34 are cleaved as a signal peptide. The heme site is built by Tyr35, Cys55, Cys58, and His59. Residues Gly287 to Leu304 form a helical membrane-spanning segment.

The protein belongs to the cytochrome f family. In terms of assembly, the 4 large subunits of the cytochrome b6-f complex are cytochrome b6, subunit IV (17 kDa polypeptide, petD), cytochrome f and the Rieske protein, while the 4 small subunits are PetG, PetL, PetM and PetN. The complex functions as a dimer. The cofactor is heme.

Its subcellular location is the plastid. The protein localises to the chloroplast thylakoid membrane. Its function is as follows. Component of the cytochrome b6-f complex, which mediates electron transfer between photosystem II (PSII) and photosystem I (PSI), cyclic electron flow around PSI, and state transitions. The polypeptide is Cytochrome f (petA) (Pinus thunbergii (Japanese black pine)).